Here is a 258-residue protein sequence, read N- to C-terminus: tRNA pseudouridine synthase A (258 aa).

D53 acts as the Nucleophile in catalysis. Position 111 (Y111) interacts with substrate.

This sequence belongs to the tRNA pseudouridine synthase TruA family. As to quaternary structure, homodimer.

The enzyme catalyses uridine(38/39/40) in tRNA = pseudouridine(38/39/40) in tRNA. Its function is as follows. Formation of pseudouridine at positions 38, 39 and 40 in the anticodon stem and loop of transfer RNAs. The protein is tRNA pseudouridine synthase A of Streptococcus agalactiae serotype Ia (strain ATCC 27591 / A909 / CDC SS700).